We begin with the raw amino-acid sequence, 750 residues long: Photosystem I P700 chlorophyll a apoprotein A1 (750 aa).

Helical transmembrane passes span 70–93 (VFSA…FHGA), 156–179 (LYCT…FHYH), 195–219 (LNHH…HVSL), 291–309 (IAHH…GHMY), 346–369 (WHAQ…HHMY), 385–411 (LSLF…IFMV), 433–455 (AIIS…LYIH), and 531–549 (FLVH…LILL). Residues cysteine 573 and cysteine 582 each coordinate [4Fe-4S] cluster. The next 2 helical transmembrane spans lie at 589 to 610 (HVFL…HFSW) and 664 to 686 (LSAY…MFLF). Histidine 675 is a binding site for chlorophyll a'. Chlorophyll a is bound by residues methionine 683 and tyrosine 691. Tryptophan 692 provides a ligand contact to phylloquinone. The chain crosses the membrane as a helical span at residues 724–744 (AVGVTHYLLGGIATTWAFFLA).

This sequence belongs to the PsaA/PsaB family. In terms of assembly, the PsaA/B heterodimer binds the P700 chlorophyll special pair and subsequent electron acceptors. PSI consists of a core antenna complex that captures photons, and an electron transfer chain that converts photonic excitation into a charge separation. The eukaryotic PSI reaction center is composed of at least 11 subunits. The cofactor is P700 is a chlorophyll a/chlorophyll a' dimer, A0 is one or more chlorophyll a, A1 is one or both phylloquinones and FX is a shared 4Fe-4S iron-sulfur center..

It localises to the plastid. It is found in the chloroplast thylakoid membrane. It catalyses the reaction reduced [plastocyanin] + hnu + oxidized [2Fe-2S]-[ferredoxin] = oxidized [plastocyanin] + reduced [2Fe-2S]-[ferredoxin]. Its function is as follows. PsaA and PsaB bind P700, the primary electron donor of photosystem I (PSI), as well as the electron acceptors A0, A1 and FX. PSI is a plastocyanin-ferredoxin oxidoreductase, converting photonic excitation into a charge separation, which transfers an electron from the donor P700 chlorophyll pair to the spectroscopically characterized acceptors A0, A1, FX, FA and FB in turn. Oxidized P700 is reduced on the lumenal side of the thylakoid membrane by plastocyanin. The polypeptide is Photosystem I P700 chlorophyll a apoprotein A1 (Citrus sinensis (Sweet orange)).